The chain runs to 486 residues: uncharacterized protein (486 aa).

2 ABC transporter domains span residues 2 to 241 and 249 to 486; these read VEFK…KVFV and FEKD…LLFL. Residue 36–43 participates in ATP binding; the sequence is GKNGEGKS.

Belongs to the ABC transporter superfamily.

This is an uncharacterized protein from Borreliella burgdorferi (strain ATCC 35210 / DSM 4680 / CIP 102532 / B31) (Borrelia burgdorferi).